The following is a 241-amino-acid chain: MTEGEGRIQLEPSWKARVGEWLLQPQMQELSAFLRQRKAANARVFPPGPQIFAAFDATPFEQVKVVVLGQDPYHGEGQAHGLCFSVLPGVPVPPSLLNIYKEIQDDLGIPRPDHGYLMPWARQGVLLLNAVLTVEQGRAGAHQNKGWEGFTDHVVETLNREREGLVFLLWGSYAQSKGKVIDQARHRVFKAPHPSPLSAHRGFLGCKHFSKTNEHLQRRGLSPIDWSLPSRAALDLSLAGG.

Catalysis depends on D71, which acts as the Proton acceptor.

The protein belongs to the uracil-DNA glycosylase (UDG) superfamily. UNG family.

It is found in the cytoplasm. It carries out the reaction Hydrolyzes single-stranded DNA or mismatched double-stranded DNA and polynucleotides, releasing free uracil.. Functionally, excises uracil residues from the DNA which can arise as a result of misincorporation of dUMP residues by DNA polymerase or due to deamination of cytosine. This chain is Uracil-DNA glycosylase, found in Xanthomonas campestris pv. campestris (strain 8004).